A 133-amino-acid polypeptide reads, in one-letter code: Large ribosomal subunit protein uL15 (133 aa).

Residues 1–58 (MALQNLTPAPGSTHATKRLGRGQGSGNGKTAGKGNKGQRARKGYNEKRGFEGGQQPLQ) are disordered. The segment covering 21–35 (RGQGSGNGKTAGKGN) has biased composition (gly residues).

This sequence belongs to the universal ribosomal protein uL15 family. Part of the 50S ribosomal subunit.

Functionally, binds to the 23S rRNA. The chain is Large ribosomal subunit protein uL15 from Campylobacter curvus (strain 525.92).